The primary structure comprises 397 residues: ATP phosphoribosyltransferase regulatory subunit (397 aa).

This sequence belongs to the class-II aminoacyl-tRNA synthetase family. HisZ subfamily. Heteromultimer composed of HisG and HisZ subunits.

The protein localises to the cytoplasm. It participates in amino-acid biosynthesis; L-histidine biosynthesis; L-histidine from 5-phospho-alpha-D-ribose 1-diphosphate: step 1/9. In terms of biological role, required for the first step of histidine biosynthesis. May allow the feedback regulation of ATP phosphoribosyltransferase activity by histidine. In Nitrosococcus oceani (strain ATCC 19707 / BCRC 17464 / JCM 30415 / NCIMB 11848 / C-107), this protein is ATP phosphoribosyltransferase regulatory subunit.